Consider the following 273-residue polypeptide: Chondrolectin (273 aa).

An N-terminal signal peptide occupies residues 1-21 (MIRIASLLLGAALLCAQGAFA). Topologically, residues 22 to 216 (RRVVSGQKVC…VVTEAGIIPN (195 aa)) are extracellular. Positions 35 to 179 (VKHPCYKMAY…CNMKHNYICK (145 aa)) constitute a C-type lectin domain. 2 disulfides stabilise this stretch: cysteine 61–cysteine 178 and cysteine 144–cysteine 170. An N-linked (GlcNAc...) asparagine glycan is attached at asparagine 86. Residues 217–237 (LIYVIIPTIPLLLLILVALGT) traverse the membrane as a helical segment. Residues 238-273 (CCFQMLHKSKGRSKTSPNQSTLWISKSTRKESGMEV) are Cytoplasmic-facing. Residues 247–273 (KGRSKTSPNQSTLWISKSTRKESGMEV) form a disordered region. A compositionally biased stretch (polar residues) spans 251 to 263 (KTSPNQSTLWISK).

In terms of assembly, interacts with RABGGTB. In terms of tissue distribution, in adult mice preferentially expressed in skeletal muscle, testis, brain, and lung. Expressed in striated muscle (at protein level). Expressed in spinal cord. Detected in spinal cord fast motor neurons (at protein level).

The protein localises to the membrane. In terms of biological role, may play a role in the development of the nervous system such as in neurite outgrowth and elongation. May be involved in motor axon growth and guidance. The sequence is that of Chondrolectin (Chodl) from Mus musculus (Mouse).